Reading from the N-terminus, the 420-residue chain is Small ribosomal subunit protein mS75 (420 aa).

The transit peptide at 1–11 (MYNLSRIIYRF) directs the protein to the mitochondrion. Disordered stretches follow at residues 99-120 (RQKN…DVMS) and 390-420 (RYSP…GKQT). Residues 102–114 (NAANPSSDNTPSD) are compositionally biased toward polar residues. The segment covering 396 to 409 (QKRRSKRKQKRKER) has biased composition (basic residues).

As to quaternary structure, component of the mitochondrial ribosome small subunit. As to expression, expressed at high levels in reproductive organs and, at lower levels, ubiquitously.

The protein resides in the mitochondrion. Essential for fertility (male and female gametophyte functions and development). Required for the integrity of female gametic mitochondria. Modulates male gametophyte functions, including pollen tube growth and style penetration. Involved in mitochondrial-driven cell-to-cell communication in embryo sacs during female gametes maturation (including embryogenesis initiation and endosperm development), especially for reciprocal signaling between central and egg cells which regulates reciprocal development. In Arabidopsis thaliana (Mouse-ear cress), this protein is Small ribosomal subunit protein mS75.